The primary structure comprises 121 residues: Chorion class CA protein ERA.4 (121 aa).

The first 23 residues, 1-23 (MSSSFFCFFLFCFQTCLIQNVYS), serve as a signal peptide directing secretion. Positions 24 to 57 (QCLGRVGPGGPPLGPYGGPLGGPGYGPVGYGGCG) are left arm. The tract at residues 58 to 105 (GYGGSGIGNVAVAGELPVAGSAAVLGQVPVIGAVEFAGPACAVGSVSI) is central domain. The right arm stretch occupies residues 106–121 (SGACGPTCGCGGSPYY).

Belongs to the chorion protein family.

Functionally, this protein is one of many from the eggshell of the silk moth. The polypeptide is Chorion class CA protein ERA.4 (ERA.4) (Bombyx mori (Silk moth)).